We begin with the raw amino-acid sequence, 457 residues long: Bifunctional protein GlmU (457 aa).

A pyrophosphorylase region spans residues 1 to 230 (MSKRYAVVLA…FEESLGVNDR (230 aa)). UDP-N-acetyl-alpha-D-glucosamine contacts are provided by residues 9 to 12 (LAAG), lysine 23, glutamine 73, and 78 to 79 (GT). Aspartate 103 contributes to the Mg(2+) binding site. 4 residues coordinate UDP-N-acetyl-alpha-D-glucosamine: glycine 140, glutamate 155, asparagine 170, and asparagine 228. Asparagine 228 contributes to the Mg(2+) binding site. The interval 231–251 (IALAEASRLMQRRINENHMRN) is linker. The segment at 252–457 (GVTLVNPENT…GYAKHLNHGK (206 aa)) is N-acetyltransferase. Residues arginine 333 and lysine 351 each coordinate UDP-N-acetyl-alpha-D-glucosamine. The active-site Proton acceptor is the histidine 363. UDP-N-acetyl-alpha-D-glucosamine-binding residues include tyrosine 366 and asparagine 377. Residues 386-387 (NY), alanine 423, and arginine 440 contribute to the acetyl-CoA site.

It in the N-terminal section; belongs to the N-acetylglucosamine-1-phosphate uridyltransferase family. The protein in the C-terminal section; belongs to the transferase hexapeptide repeat family. As to quaternary structure, homotrimer. Mg(2+) serves as cofactor.

It localises to the cytoplasm. It catalyses the reaction alpha-D-glucosamine 1-phosphate + acetyl-CoA = N-acetyl-alpha-D-glucosamine 1-phosphate + CoA + H(+). The enzyme catalyses N-acetyl-alpha-D-glucosamine 1-phosphate + UTP + H(+) = UDP-N-acetyl-alpha-D-glucosamine + diphosphate. It functions in the pathway nucleotide-sugar biosynthesis; UDP-N-acetyl-alpha-D-glucosamine biosynthesis; N-acetyl-alpha-D-glucosamine 1-phosphate from alpha-D-glucosamine 6-phosphate (route II): step 2/2. Its pathway is nucleotide-sugar biosynthesis; UDP-N-acetyl-alpha-D-glucosamine biosynthesis; UDP-N-acetyl-alpha-D-glucosamine from N-acetyl-alpha-D-glucosamine 1-phosphate: step 1/1. It participates in bacterial outer membrane biogenesis; LPS lipid A biosynthesis. In terms of biological role, catalyzes the last two sequential reactions in the de novo biosynthetic pathway for UDP-N-acetylglucosamine (UDP-GlcNAc). The C-terminal domain catalyzes the transfer of acetyl group from acetyl coenzyme A to glucosamine-1-phosphate (GlcN-1-P) to produce N-acetylglucosamine-1-phosphate (GlcNAc-1-P), which is converted into UDP-GlcNAc by the transfer of uridine 5-monophosphate (from uridine 5-triphosphate), a reaction catalyzed by the N-terminal domain. This Listeria monocytogenes serotype 4b (strain F2365) protein is Bifunctional protein GlmU.